We begin with the raw amino-acid sequence, 553 residues long: Protein Early 65 kDa (553 aa).

The protein localises to the host cytoplasm. May participate in the recruitment of G-actin to the host nucleus. The sequence is that of Protein Early 65 kDa (HE65) from Autographa californica nuclear polyhedrosis virus (AcMNPV).